Consider the following 376-residue polypeptide: MMKLLLVVATSVALIFSVTDLSGEGPKHGGESMLTVQIPDFRLIPTTGALGPESFVFDFFGDGPYTGLSDGRIVKWLANESRWIDFAVTTSAREGCEGPHEHQRTEHVCGRPLGLAFDKSTGDLYIADAYMGLLKVGPTGGVATQVLPRELNEALRFTNSLDINPRTGVVYFTDSSSVYQRRNYIGAMMSGDKTGRLMKYDNTKQVTTLLSNLAFVNGVALSQNGDYLLVVETAMCRILRYWLNETSVKSQSHDNYEIFAEGLPGFPDNIKRSPRGGFWVGLNTKHSKLTKFAMSNAWLGRAALGLPVDWMKVHSVWARYNGNGMAVRLSEDSGVILEVFEGKNENKWISISEVEEKDGTLWVGSVNTPFAGMYKI.

The signal sequence occupies residues Met-1–Gly-23. Asn-79 and Asn-244 each carry an N-linked (GlcNAc...) asparagine glycan.

It belongs to the strictosidine synthase family.

The protein resides in the vacuole. In Arabidopsis thaliana (Mouse-ear cress), this protein is Protein STRICTOSIDINE SYNTHASE-LIKE 2.